The chain runs to 124 residues: MSGVWVFNKNGVMRLVENPYNQSAGDSSESSSSGGNQQQRMRRKILVHLPSSEVVSSYGSLEKILKNLGWERYYSGDNTDHLLQFHKRTSIDLISLPRDFSKFNSIHMYDIVVKNPNVFHVRDM.

Residues 19–42 (PYNQSAGDSSESSSSGGNQQQRMR) are disordered. Positions 22-39 (QSAGDSSESSSSGGNQQQ) are enriched in low complexity.

The protein belongs to the FPF1 family. In terms of tissue distribution, expressed in roots, flowers, and at a low level, in leaves.

Functionally, modulates the competence to flowering of apical meristems. In Arabidopsis thaliana (Mouse-ear cress), this protein is Flowering-promoting factor 1-like protein 1 (FLP1).